The sequence spans 264 residues: Merozoite surface protein 2 (264 aa).

The N-terminal stretch at 1–20 (MKVIKTLSIINFFIFVTFNI) is a signal peptide. Residues asparagine 22 and asparagine 36 are each glycosylated (N-linked (GlcNAc...) asparagine). The interval 44 to 190 (ANEGSNTNSV…PQTAENENPA (147 aa)) is polymorphic region. The interval 46-225 (EGSNTNSVGA…DSQKECTDGN (180 aa)) is disordered. Repeat copies occupy residues 60–91 (ADTIASGSQRSTNSASTSTTNNGESQTTTPTA) and 92–123 (ADTIASGSQRSTNSASTSTTNNGESQTTTPTA). A 2 X 32 AA perfects repeats region spans residues 60 to 123 (ADTIASGSQR…GESQTTTPTA (64 aa)). Residues 70–81 (STNSASTSTTNN) show a composition bias toward low complexity. Residues 82-101 (GESQTTTPTAADTIASGSQR) show a composition bias toward polar residues. Low complexity predominate over residues 102–145 (STNSASTSTTNNGESQTTTPTAADTPTTTESNSPSPPITTTESS). N-linked (GlcNAc...) asparagine glycosylation is present at asparagine 152. Basic and acidic residues predominate over residues 154-166 (TDGKGEESEKQNE). N-linked (GlcNAc...) asparagine glycans are attached at residues asparagine 168 and asparagine 213. A disulfide bridge links cysteine 221 with cysteine 229. N-linked (GlcNAc...) asparagine glycosylation is found at asparagine 237 and asparagine 238. A lipid anchor (GPI-anchor amidated asparagine) is attached at asparagine 238. Residues 239-264 (SSNIASINKFVVLISATLVLSFAIFI) constitute a propeptide, removed in mature form.

It is found in the cell membrane. Its function is as follows. May play a role in the merozoite attachment to the erythrocyte. The sequence is that of Merozoite surface protein 2 from Plasmodium falciparum (isolate fid3 / India).